Here is a 417-residue protein sequence, read N- to C-terminus: Serine hydroxymethyltransferase (417 aa).

Residues L117 and 121 to 123 (GHL) contribute to the (6S)-5,6,7,8-tetrahydrofolate site. At K226 the chain carries N6-(pyridoxal phosphate)lysine.

Belongs to the SHMT family. In terms of assembly, homodimer. Requires pyridoxal 5'-phosphate as cofactor.

The protein localises to the cytoplasm. The catalysed reaction is (6R)-5,10-methylene-5,6,7,8-tetrahydrofolate + glycine + H2O = (6S)-5,6,7,8-tetrahydrofolate + L-serine. Its pathway is one-carbon metabolism; tetrahydrofolate interconversion. It functions in the pathway amino-acid biosynthesis; glycine biosynthesis; glycine from L-serine: step 1/1. Its function is as follows. Catalyzes the reversible interconversion of serine and glycine with tetrahydrofolate (THF) serving as the one-carbon carrier. This reaction serves as the major source of one-carbon groups required for the biosynthesis of purines, thymidylate, methionine, and other important biomolecules. Also exhibits THF-independent aldolase activity toward beta-hydroxyamino acids, producing glycine and aldehydes, via a retro-aldol mechanism. The sequence is that of Serine hydroxymethyltransferase from Syntrophus aciditrophicus (strain SB).